Reading from the N-terminus, the 84-residue chain is MLMIRLSRRGARKQPHYRIVVIEKDRARDGRSVEVVGTYNPRTNPGSIELKRERVEYWVSKGAQMSDRVKKLWDKTPAAPASVA.

Belongs to the bacterial ribosomal protein bS16 family.

This Koribacter versatilis (strain Ellin345) protein is Small ribosomal subunit protein bS16.